The sequence spans 268 residues: Mediator of RNA polymerase II transcription subunit 8 (268 aa).

Positions methionine 1–phenylalanine 29 form a coiled coil. Phosphoserine is present on serine 82. Positions alanine 133 to serine 163 form a coiled coil. The interval serine 142–leucine 151 is interaction with the Elongin BC complex. Disordered regions lie at residues lysine 156–glycine 176 and asparagine 193–arginine 268. The segment covering serine 200–glycine 209 has biased composition (gly residues).

It belongs to the Mediator complex subunit 8 family. Component of the Mediator complex, which is composed of MED1, MED4, MED6, MED7, MED8, MED9, MED10, MED11, MED12, MED13, MED13L, MED14, MED15, MED16, MED17, MED18, MED19, MED20, MED21, MED22, MED23, MED24, MED25, MED26, MED27, MED29, MED30, MED31, CCNC, CDK8 and CDC2L6/CDK11. The MED12, MED13, CCNC and CDK8 subunits form a distinct module termed the CDK8 module. Mediator containing the CDK8 module is less active than Mediator lacking this module in supporting transcriptional activation. Individual preparations of the Mediator complex lacking one or more distinct subunits have been variously termed ARC, CRSP, DRIP, PC2, SMCC and TRAP. May be part of a multisubunit E3 ubiquitin-protein ligase complex with the Elongin BC complex (ELOB and ELOC), CUL2 and RBX1.

The protein resides in the nucleus. Its pathway is protein modification; protein ubiquitination. In terms of biological role, component of the Mediator complex, a coactivator involved in the regulated transcription of nearly all RNA polymerase II-dependent genes. Mediator functions as a bridge to convey information from gene-specific regulatory proteins to the basal RNA polymerase II transcription machinery. Mediator is recruited to promoters by direct interactions with regulatory proteins and serves as a scaffold for the assembly of a functional preinitiation complex with RNA polymerase II and the general transcription factors. May play a role as a target recruitment subunit in E3 ubiquitin-protein ligase complexes and thus in ubiquitination and subsequent proteasomal degradation of target proteins. In Mus musculus (Mouse), this protein is Mediator of RNA polymerase II transcription subunit 8 (Med8).